The sequence spans 195 residues: Interferon tau-2 (195 aa).

The signal sequence occupies residues 1–23; it reads MAFVLSLLMALVLVSYGPGGSLG. Disulfide bonds link cysteine 24–cysteine 122 and cysteine 52–cysteine 162.

Belongs to the alpha/beta interferon family. IFN-alphaII subfamily. As to expression, constitutively and exclusively expressed in the mononuclear cells of the extraembryonic trophectoderm.

It is found in the secreted. Functionally, paracrine hormone primarily responsible for maternal recognition of pregnancy. Interacts with endometrial receptors, probably type I interferon receptors, and blocks estrogen receptor expression, preventing the estrogen-induced increase in oxytocin receptor expression in the endometrium. This results in the suppression of the pulsatile endometrial release of the luteolytic hormone prostaglandin F2-alpha, hindering the regression of the corpus luteum (luteolysis) and therefore a return to ovarian cyclicity. This, and a possible direct effect of IFN-tau on prostaglandin synthesis, leads in turn to continued ovarian progesterone secretion, which stimulates the secretion by the endometrium of the nutrients required for the growth of the conceptus. In summary, displays particularly high antiviral and antiproliferative potency concurrently with particular weak cytotoxicity, high antiluteolytic activity and immunomodulatory properties. In contrast with other IFNs, IFN-tau is not virally inducible. In Ovis aries (Sheep), this protein is Interferon tau-2 (IFNT2).